We begin with the raw amino-acid sequence, 478 residues long: Keratin, type II cytoskeletal 8 (478 aa).

The segment at 1–97 is head; that stretch reads MSIRVTQKSY…DPNIQAVRTQ (97 aa). Ser-9 carries the post-translational modification Phosphoserine; by PKC/PRKCE. Residue Lys-11 forms a Glycyl lysine isopeptide (Lys-Gly) (interchain with G-Cter in SUMO2) linkage. 4 positions are modified to phosphoserine: Ser-13, Ser-15, Ser-21, and Ser-22. Residues 16 to 44 are disordered; that stretch reads APRSFSSRSYTSGPGSRISSSAFSRVGSS. Arg-23 is modified (omega-N-methylarginine). Ser-24 carries the phosphoserine; by PKC/PRKCE modification. The residue at position 26 (Thr-26) is a Phosphothreonine. Residues Ser-27 and Ser-31 each carry the phosphoserine modification. Arg-32 bears the Omega-N-methylarginine mark. Phosphoserine occurs at positions 34 and 39. The residue at position 40 (Arg-40) is an Omega-N-methylarginine. A phosphoserine mark is found at Ser-43 and Ser-44. Asymmetric dimethylarginine; alternate is present on Arg-48. Arg-48 is subject to Omega-N-methylarginine; alternate. Phosphoserine; by MAPK is present on Ser-81. The tract at residues 98-133 is coil 1A; the sequence is EKEQIKTLNNKFASFIDKVRHLEQQNKVLETKWNLL. The region spanning 98-409 is the IF rod domain; the sequence is EKEQIKTLNN…KLLEGEESRL (312 aa). An N6-malonyllysine modification is found at Lys-108. Residues Lys-129 and Lys-137 each participate in a glycyl lysine isopeptide (Lys-Gly) (interchain with G-Cter in SUMO2) cross-link. The tract at residues 134–150 is linker 1; sequence QQQKTARSNIDNMFESY. The interval 151-242 is coil 1B; that stretch reads INNLRRQLET…QLYEEEIREM (92 aa). Lys-204 is covalently cross-linked (Glycyl lysine isopeptide (Lys-Gly) (interchain with G-Cter in SUMO1); alternate). A Glycyl lysine isopeptide (Lys-Gly) (interchain with G-Cter in SUMO2); alternate cross-link involves residue Lys-204. Lys-214 bears the N6-acetyllysine mark. Tyr-235 carries the phosphotyrosine modification. The tract at residues 243–266 is linker 12; it reads QSQISDTSVVLEMDNNRNLDLDGI. Positions 267–405 are coil 2; sequence IAEVKAQYEE…ATYRKLLEGE (139 aa). The necessary for interaction with PNN stretch occupies residues 268 to 389; that stretch reads AEVKAQYEEI…EYQELMNVKL (122 aa). Residue Lys-271 forms a Glycyl lysine isopeptide (Lys-Gly) (interchain with G-Cter in SUMO2) linkage. A Phosphoserine modification is found at Ser-281. A Glycyl lysine isopeptide (Lys-Gly) (interchain with G-Cter in SUMO2) cross-link involves residue Lys-292. Lys-302 participates in a covalent cross-link: Glycyl lysine isopeptide (Lys-Gly) (interchain with G-Cter in SUMO2); alternate. Position 302 is an N6-acetyllysine; alternate (Lys-302). Residue Lys-311 forms a Glycyl lysine isopeptide (Lys-Gly) (interchain with G-Cter in SUMO2) linkage. Lys-332 is covalently cross-linked (Glycyl lysine isopeptide (Lys-Gly) (interchain with G-Cter in SUMO2); alternate). Lys-332 is modified (N6-acetyllysine; alternate). Ser-337 bears the Phosphoserine mark. Lys-400 is covalently cross-linked (Glycyl lysine isopeptide (Lys-Gly) (interchain with G-Cter in SUMO2)). Residues 406–478 are tail; sequence ESRLESGMQN…VSESSDVLSK (73 aa). Ser-407, Ser-411, Ser-417, Ser-424, and Ser-433 each carry phosphoserine. Lys-467 is covalently cross-linked (Glycyl lysine isopeptide (Lys-Gly) (interchain with G-Cter in SUMO1); alternate). Lys-467 is covalently cross-linked (Glycyl lysine isopeptide (Lys-Gly) (interchain with G-Cter in SUMO2); alternate). Ser-470, Ser-472, Ser-473, and Ser-477 each carry phosphoserine.

The protein belongs to the intermediate filament family. As to quaternary structure, heterotetramer of two type I and two type II keratins. Forms a heterodimer with KRT18. Associates with KRT20. Interacts with PNN. When associated with KRT19, interacts with DMD. Interacts with TCHP. Interacts with APEX1. Interacts with GPER1. Interacts with EPPK1. Interacts with PKP1 and PKP2. Post-translationally, O-glycosylated. O-GlcNAcylation at multiple sites increases solubility, and decreases stability by inducing proteasomal degradation. In terms of processing, O-glycosylated (O-GlcNAcylated), in a cell cycle-dependent manner. As to expression, expressed in bladder, liver, exocervix and (in very low amounts) esophagus.

It is found in the cytoplasm. It localises to the nucleus. The protein localises to the nucleoplasm. Its subcellular location is the nucleus matrix. Functionally, together with KRT19, helps to link the contractile apparatus to dystrophin at the costameres of striated muscle. The chain is Keratin, type II cytoskeletal 8 (KRT8) from Bos taurus (Bovine).